We begin with the raw amino-acid sequence, 287 residues long: Acetyl-coenzyme A carboxylase carboxyl transferase subunit beta (287 aa).

Positions 25 to 287 (VWTKCSACEQ…KMLNTHVIEE (263 aa)) constitute a CoA carboxyltransferase N-terminal domain. The Zn(2+) site is built by Cys29, Cys32, Cys48, and Cys51. The C4-type zinc finger occupies 29-51 (CSACEQVLYRAELERNLEVCPKC).

Belongs to the AccD/PCCB family. Acetyl-CoA carboxylase is a heterohexamer composed of biotin carboxyl carrier protein (AccB), biotin carboxylase (AccC) and two subunits each of ACCase subunit alpha (AccA) and ACCase subunit beta (AccD). Zn(2+) serves as cofactor.

The protein resides in the cytoplasm. It carries out the reaction N(6)-carboxybiotinyl-L-lysyl-[protein] + acetyl-CoA = N(6)-biotinyl-L-lysyl-[protein] + malonyl-CoA. It functions in the pathway lipid metabolism; malonyl-CoA biosynthesis; malonyl-CoA from acetyl-CoA: step 1/1. Functionally, component of the acetyl coenzyme A carboxylase (ACC) complex. Biotin carboxylase (BC) catalyzes the carboxylation of biotin on its carrier protein (BCCP) and then the CO(2) group is transferred by the transcarboxylase to acetyl-CoA to form malonyl-CoA. This Aeromonas hydrophila subsp. hydrophila (strain ATCC 7966 / DSM 30187 / BCRC 13018 / CCUG 14551 / JCM 1027 / KCTC 2358 / NCIMB 9240 / NCTC 8049) protein is Acetyl-coenzyme A carboxylase carboxyl transferase subunit beta.